Reading from the N-terminus, the 121-residue chain is Small ribosomal subunit protein uS13 (121 aa).

Positions 96–121 (PVRGQNTKNNARTRKGKAVAIAGKKK) are disordered. Residues 106-121 (ARTRKGKAVAIAGKKK) are compositionally biased toward basic residues.

This sequence belongs to the universal ribosomal protein uS13 family. As to quaternary structure, part of the 30S ribosomal subunit. Forms a loose heterodimer with protein S19. Forms two bridges to the 50S subunit in the 70S ribosome.

Located at the top of the head of the 30S subunit, it contacts several helices of the 16S rRNA. In the 70S ribosome it contacts the 23S rRNA (bridge B1a) and protein L5 of the 50S subunit (bridge B1b), connecting the 2 subunits; these bridges are implicated in subunit movement. Contacts the tRNAs in the A and P-sites. The chain is Small ribosomal subunit protein uS13 from Streptococcus pyogenes serotype M3 (strain SSI-1).